Here is a 152-residue protein sequence, read N- to C-terminus: Protein-export protein SecB (152 aa).

The protein belongs to the SecB family. In terms of assembly, homotetramer, a dimer of dimers. One homotetramer interacts with 1 SecA dimer.

It is found in the cytoplasm. In terms of biological role, one of the proteins required for the normal export of preproteins out of the cell cytoplasm. It is a molecular chaperone that binds to a subset of precursor proteins, maintaining them in a translocation-competent state. It also specifically binds to its receptor SecA. This Rickettsia bellii (strain RML369-C) protein is Protein-export protein SecB.